The chain runs to 873 residues: Leucine--tRNA ligase (873 aa).

Positions 43–53 match the 'HIGH' region motif; sequence PYPSGSLHMGH. A 'KMSKS' region motif is present at residues 624 to 628; the sequence is TMSKS. Lys-627 is a binding site for ATP.

It belongs to the class-I aminoacyl-tRNA synthetase family.

It localises to the cytoplasm. It catalyses the reaction tRNA(Leu) + L-leucine + ATP = L-leucyl-tRNA(Leu) + AMP + diphosphate. The polypeptide is Leucine--tRNA ligase (Synechococcus sp. (strain JA-3-3Ab) (Cyanobacteria bacterium Yellowstone A-Prime)).